Reading from the N-terminus, the 634-residue chain is Nucleoside triphosphatase I (634 aa).

Residues 41-203 (FLGLDSMNSL…ALLVNLLRPG (163 aa)) enclose the Helicase ATP-binding domain. Position 54-61 (54-61 (QETGVGKT)) interacts with ATP. Residues 140–143 (DECH) carry the DEXH box motif. Residues 355-531 (SLYQALYEHS…EFSQLYRVLK (177 aa)) form the Helicase C-terminal domain. Residues 456–523 (DIFILDMTWN…EIIQNKAREF (68 aa)) are binding to the cap-specific mRNA (nucleoside-2'-O-)-methyltransferase.

This sequence belongs to the helicase family. NPH I subfamily. Monomer. Interacts (via C-terminus) with RAP94 (via N-terminus). Interacts with the cap-specific mRNA (nucleoside-2'-O-)-methyltransferase.

Its subcellular location is the virion. It catalyses the reaction a ribonucleoside 5'-triphosphate + H2O = a ribonucleoside 5'-diphosphate + phosphate + H(+). Functionally, DNA-dependent ATPase required for providing the needed energy to achieve the termination of early transcripts. Acts in concert with the RAP94 subunit of the virion RNA polymerase and the capping enzyme/VTF to catalyze release of UUUUUNU-containing nascent RNA from the elongation complex. NPH-I must bind ssDNA in order to exhibit ATPase activity. The sequence is that of Nucleoside triphosphatase I (NPH1) from Homo sapiens (Human).